We begin with the raw amino-acid sequence, 343 residues long: MLKTIALDAMGGDHGPKVIVPAALSILKKHPKVKLILVGKEDQLALLIPEKNRKSFGQRLEIIHASEEVGMDEPPSQALRTKKNSSMRVAINLVKEGQAHACVSAGNTGALMATARYVLKTLPGIDRPAIIAAFPTKNEREVRVLDLGANVDSTPENLYQFAVMGSILSSAAHNIRNPRIGLLNVGEEEIKGNELVKKANELFETRKTINYIGYVEGNTIFNNIADVVVCDGFVGNAVLKASEGVAQLIKQHAKEAFSEAWWTKLALLPAIPILKRLIRRVDPERYNGATFLGLNGIVVKSHGSANIKAFVCAVEEAIFQVDKNIPQLIKEEVAHILKEFENK.

This sequence belongs to the PlsX family. As to quaternary structure, homodimer. Probably interacts with PlsY.

The protein localises to the cytoplasm. The enzyme catalyses a fatty acyl-[ACP] + phosphate = an acyl phosphate + holo-[ACP]. Its pathway is lipid metabolism; phospholipid metabolism. In terms of biological role, catalyzes the reversible formation of acyl-phosphate (acyl-PO(4)) from acyl-[acyl-carrier-protein] (acyl-ACP). This enzyme utilizes acyl-ACP as fatty acyl donor, but not acyl-CoA. The polypeptide is Phosphate acyltransferase (Coxiella burnetii (strain Dugway 5J108-111)).